The chain runs to 189 residues: Elongation factor P (189 aa).

The protein belongs to the elongation factor P family.

It is found in the cytoplasm. Its pathway is protein biosynthesis; polypeptide chain elongation. Functionally, involved in peptide bond synthesis. Stimulates efficient translation and peptide-bond synthesis on native or reconstituted 70S ribosomes in vitro. Probably functions indirectly by altering the affinity of the ribosome for aminoacyl-tRNA, thus increasing their reactivity as acceptors for peptidyl transferase. This is Elongation factor P from Pseudomonas putida (strain GB-1).